A 514-amino-acid chain; its full sequence is Putative fucosyltransferase 10 (514 aa).

N-linked (GlcNAc...) asparagine glycans are attached at residues Asn-185, Asn-210, Asn-355, Asn-377, and Asn-456.

Belongs to the glycosyltransferase 37 family. In terms of tissue distribution, expressed in root, leaves, stems and seedlings.

The protein localises to the golgi apparatus. The protein operates within protein modification; protein glycosylation. May be involved in cell wall biosynthesis. May act as a fucosyltransferase. This Arabidopsis thaliana (Mouse-ear cress) protein is Putative fucosyltransferase 10 (FUT10).